A 427-amino-acid chain; its full sequence is MTEAMKITLSTQPADARWGEKATYSINNDGITLHLNGADDLGLIQRAARKIDGLGIKHVQLSGEGWDADRCWAFWQGYKAPKGTRKVVWPDLDDAQRQELDNRLMIIDWVRDTINAPAEELGPSQLAQRAVDLISNVAGDRVTYRITKGEDLREQGYMGLHTVGRGSERSPVLLALDYNPTGDKEAPVYACLVGKGITFDSGGYSIKQTAFMDSMKSDMGGAATVTGALAFAITRGLNKRVKLFLCCADNLISGNAFKLGDIITYRNGKKVEVMNTDAEGRLVLADGLIDASAQKPEMIIDAATLTGAAKTALGNDYHALFSFDDALAGRLLASAAQENEPFWRLPLAEFHRSQLPSNFAELNNTGSAAYPAGASTAAGFLSHFVENYQQGWLHIDCSATYRKAPVEQWSAGATGLGVRTIANLLTA.

Mn(2+) contacts are provided by Lys-195 and Asp-200. The active site involves Lys-207. Mn(2+) is bound by residues Asp-218, Asp-277, and Glu-279. Arg-281 is a catalytic residue.

The protein belongs to the peptidase M17 family. Homohexamer. Mn(2+) is required as a cofactor.

The protein resides in the cytoplasm. The catalysed reaction is Release of an N-terminal amino acid, Xaa, from a peptide or arylamide. Xaa is preferably Glu or Asp but may be other amino acids, including Leu, Met, His, Cys and Gln.. Functionally, probably plays an important role in intracellular peptide degradation. The polypeptide is Peptidase B (Escherichia coli (strain K12 / MC4100 / BW2952)).